The chain runs to 295 residues: Putative S-adenosyl-L-methionine-dependent methyltransferase Mvan_0910 (295 aa).

S-adenosyl-L-methionine is bound by residues Asp126 and 155 to 156 (DL).

The protein belongs to the UPF0677 family.

Exhibits S-adenosyl-L-methionine-dependent methyltransferase activity. This Mycolicibacterium vanbaalenii (strain DSM 7251 / JCM 13017 / BCRC 16820 / KCTC 9966 / NRRL B-24157 / PYR-1) (Mycobacterium vanbaalenii) protein is Putative S-adenosyl-L-methionine-dependent methyltransferase Mvan_0910.